Here is a 287-residue protein sequence, read N- to C-terminus: tRNA pseudouridine synthase B (287 aa).

The Nucleophile role is filled by Asp38.

The protein belongs to the pseudouridine synthase TruB family. Type 1 subfamily.

It catalyses the reaction uridine(55) in tRNA = pseudouridine(55) in tRNA. Its function is as follows. Responsible for synthesis of pseudouridine from uracil-55 in the psi GC loop of transfer RNAs. This is tRNA pseudouridine synthase B from Aquifex aeolicus (strain VF5).